The following is a 296-amino-acid chain: MISPKDFLRKNLKMIHGYPIIYTFANNWENIEQFHSRPDDIIIATYPKSGTTWVSEIVDMVLNNGDVEKCKRDFITVKVPMLEMAVPGLRTSGIEQLEKNPSPRLVKTHLPIALLPKSFWENNCKMIYLARNAKDVAVSYYHFDLMNNLEPAPGPWEEYLERFMTGNVAYGSWFNHVKSWWKKKEEHPILFLYYEDMKENPKREVQKIARFLEKNLNDEVLDKIIHHTSFEMMKDNPLVNYTHLPSTVMDHSKSSFMRKGIAGDWKNYFTVAQNEKFDVIYKKEMSGTTLQFRTEI.

A 3'-phosphoadenylyl sulfate-binding site is contributed by 48–53; sequence KSGTTW. 107 to 109 is a binding site for substrate; the sequence is KTH. Catalysis depends on H109, which acts as the Proton acceptor. Residues R131, S139, Y194, 228–233, and 258–260 each bind 3'-phosphoadenylyl sulfate; these read TSFEMM and RKG.

Belongs to the sulfotransferase 1 family. Expressed highly in the colon, kidney and small intestine of male and female dogs. Highly expressed in the jejunum and ileum of the male dog than the female dog, which displayed more expression in duodenum (at protein level).

Its subcellular location is the cytoplasm. The catalysed reaction is a phenol + 3'-phosphoadenylyl sulfate = an aryl sulfate + adenosine 3',5'-bisphosphate + H(+). It carries out the reaction 3,3',5-triiodo-L-thyronine + 3'-phosphoadenylyl sulfate = 3,3',5-triiodo-L-thyronine sulfate + adenosine 3',5'-bisphosphate + H(+). It catalyses the reaction 3,3',5'-triiodo-L-thyronine + 3'-phosphoadenylyl sulfate = 3,3',5'-triiodo-L-thyronine sulfate + adenosine 3',5'-bisphosphate + H(+). The enzyme catalyses 3,3'-diiodo-L-thyronine + 3'-phosphoadenylyl sulfate = 3,3'-diiodo-L-thyronine sulfate + adenosine 3',5'-bisphosphate + H(+). The catalysed reaction is 4-ethylphenol + 3'-phosphoadenylyl sulfate = 4-ethylphenyl sulfate + adenosine 3',5'-bisphosphate + H(+). Sulfotransferase that utilizes 3'-phospho-5'-adenylyl sulfate (PAPS) as sulfonate donor to catalyze the sulfate conjugation of dopamine, small phenols such as 1-naphthol and p-nitrophenol and thyroid hormones, including 3,3'-diiodothyronine, triidothyronine (T3) and reverse triiodothyronine (rT3). May play a role in gut microbiota-host metabolic interaction. O-sulfonates 4-ethylphenol (4-EP), a dietary tyrosine-derived metabolite produced by gut bacteria. The product 4-EPS crosses the blood-brain barrier and may negatively regulate oligodendrocyte maturation and myelination, affecting the functional connectivity of different brain regions associated with the limbic system. This is Sulfotransferase 1B1 (SULT1B1) from Canis lupus familiaris (Dog).